The sequence spans 539 residues: Putative S-adenosyl-L-methionine-dependent methyltransferase MAP_4079 (539 aa).

S-adenosyl-L-methionine is bound by residues D134 and 163 to 164 (DL). The segment at 290–392 (AGYGRGRRRP…RGEPGERGGQ (103 aa)) is disordered. Polar residues predominate over residues 301 to 313 (SATSCRGTCSSPR). The span at 341-351 (HGFGNQCGGPD) shows a compositional bias: gly residues.

This sequence belongs to the UPF0677 family.

Functionally, exhibits S-adenosyl-L-methionine-dependent methyltransferase activity. The polypeptide is Putative S-adenosyl-L-methionine-dependent methyltransferase MAP_4079 (Mycolicibacterium paratuberculosis (strain ATCC BAA-968 / K-10) (Mycobacterium paratuberculosis)).